Here is a 1561-residue protein sequence, read N- to C-terminus: Sterile alpha motif domain-containing protein 9-like (1561 aa).

Residues 14 to 79 (WTKEHVRKWV…RMYNKLISSP (66 aa)) form the SAM domain. Positions 78 to 157 (SPESHNQDSR…DNKPKPEQMS (80 aa)) are disordered. 2 stretches are compositionally biased toward basic and acidic residues: residues 82–107 (HNQD…KNEE) and 142–153 (VTKDMEDNKPKP).

In terms of assembly, interacts with EEA1.

Its subcellular location is the early endosome. It localises to the mitochondrion. In terms of biological role, may be involved in endosome fusion. Mediates down-regulation of growth factor signaling via internalization of growth factor receptors. The protein is Sterile alpha motif domain-containing protein 9-like (Samd9l) of Mus musculus (Mouse).